The primary structure comprises 293 residues: Elongation factor Ts (293 aa).

The involved in Mg(2+) ion dislocation from EF-Tu stretch occupies residues 80–83 (TDFV).

Belongs to the EF-Ts family.

Its subcellular location is the cytoplasm. Associates with the EF-Tu.GDP complex and induces the exchange of GDP to GTP. It remains bound to the aminoacyl-tRNA.EF-Tu.GTP complex up to the GTP hydrolysis stage on the ribosome. This Burkholderia cenocepacia (strain ATCC BAA-245 / DSM 16553 / LMG 16656 / NCTC 13227 / J2315 / CF5610) (Burkholderia cepacia (strain J2315)) protein is Elongation factor Ts.